The following is a 629-amino-acid chain: tRNA uridine 5-carboxymethylaminomethyl modification enzyme MnmG (629 aa).

Residues 13-18 (GGGHAG), Val-125, and Ser-180 each bind FAD. Position 273–287 (273–287 (GPRYCPSIEDKVMRF)) interacts with NAD(+). Gln-370 contacts FAD.

The protein belongs to the MnmG family. In terms of assembly, homodimer. Heterotetramer of two MnmE and two MnmG subunits. It depends on FAD as a cofactor.

Its subcellular location is the cytoplasm. Functionally, NAD-binding protein involved in the addition of a carboxymethylaminomethyl (cmnm) group at the wobble position (U34) of certain tRNAs, forming tRNA-cmnm(5)s(2)U34. In Salmonella agona (strain SL483), this protein is tRNA uridine 5-carboxymethylaminomethyl modification enzyme MnmG.